A 63-amino-acid polypeptide reads, in one-letter code: Cecropin-A (63 aa).

Positions 1–22 (MNFVRILSFVFALVLALGAVSA) are cleaved as a signal peptide. Residues 23–26 (APEP) constitute a propeptide that is removed on maturation. At L61 the chain carries Leucine amide.

Belongs to the cecropin family. Highest expression in fat body and hemocytes. Is also expressed in Malpighian tubules and to a much lesser extent in midgut. Not present in silk gland.

Its subcellular location is the secreted. Cecropins have lytic and antibacterial activity against several Gram-positive and Gram-negative bacteria. This Bombyx mori (Silk moth) protein is Cecropin-A (CECA).